The following is a 423-amino-acid chain: UDP-N-acetylglucosamine 1-carboxyvinyltransferase 1 (423 aa).

A phosphoenolpyruvate-binding site is contributed by 23–24; the sequence is KN. R96 contributes to the UDP-N-acetyl-alpha-D-glucosamine binding site. C120 functions as the Proton donor in the catalytic mechanism. C120 carries the post-translational modification 2-(S-cysteinyl)pyruvic acid O-phosphothioketal. 2 residues coordinate UDP-N-acetyl-alpha-D-glucosamine: D309 and V331.

This sequence belongs to the EPSP synthase family. MurA subfamily.

The protein resides in the cytoplasm. It carries out the reaction phosphoenolpyruvate + UDP-N-acetyl-alpha-D-glucosamine = UDP-N-acetyl-3-O-(1-carboxyvinyl)-alpha-D-glucosamine + phosphate. It functions in the pathway cell wall biogenesis; peptidoglycan biosynthesis. Cell wall formation. Adds enolpyruvyl to UDP-N-acetylglucosamine. This chain is UDP-N-acetylglucosamine 1-carboxyvinyltransferase 1, found in Streptococcus pyogenes serotype M3 (strain ATCC BAA-595 / MGAS315).